A 238-amino-acid chain; its full sequence is Ribonuclease-like storage protein (238 aa).

The first 23 residues, Met-1–Ala-23, serve as a signal peptide directing secretion. Residue Gln-37 coordinates RNA. A disulfide bridge connects residues Cys-43 and Cys-49. RNA contacts are provided by residues His-61, Phe-109, His-112–Glu-113, and Lys-116–His-117. His-61 serves as the catalytic Proton donor. Disulfide bonds link Cys-76/Cys-120 and Cys-196/Cys-207. Glu-113 is a catalytic residue. His-117 serves as the catalytic Proton acceptor.

This sequence belongs to the RNase T2 family. Homodimer. As to expression, root.

Functionally, may act as a storage protein providing a nitrogen source. Seems to have no RNase activity although it has conserved the active site residues. In Panax ginseng (Korean ginseng), this protein is Ribonuclease-like storage protein.